A 377-amino-acid polypeptide reads, in one-letter code: 2-aminoethylphosphonate--pyruvate transaminase (377 aa).

Position 194 is an N6-(pyridoxal phosphate)lysine (Lys194).

The protein belongs to the class-V pyridoxal-phosphate-dependent aminotransferase family. PhnW subfamily. In terms of assembly, homodimer. Pyridoxal 5'-phosphate is required as a cofactor.

It catalyses the reaction (2-aminoethyl)phosphonate + pyruvate = phosphonoacetaldehyde + L-alanine. Functionally, involved in phosphonate degradation. This is 2-aminoethylphosphonate--pyruvate transaminase from Cupriavidus necator (strain ATCC 17699 / DSM 428 / KCTC 22496 / NCIMB 10442 / H16 / Stanier 337) (Ralstonia eutropha).